The sequence spans 343 residues: Flavonoid 4'-O-methyltransferase 4 (343 aa).

An S-adenosyl-L-methionine-binding site is contributed by D211. H249 (proton acceptor) is an active-site residue.

The protein belongs to the class I-like SAM-binding methyltransferase superfamily. Cation-independent O-methyltransferase family. In terms of assembly, homodimer.

The catalysed reaction is apigenin + S-adenosyl-L-methionine = acacetin + S-adenosyl-L-homocysteine + H(+). It carries out the reaction kaempferol + S-adenosyl-L-methionine = kaempferide + S-adenosyl-L-homocysteine + H(+). The enzyme catalyses isorhamnetin + S-adenosyl-L-methionine = 3',4'-O-dimethylquercetin + S-adenosyl-L-homocysteine + 2 H(+). It catalyses the reaction scutellarein + S-adenosyl-L-methionine = scutellarein 4'-methyl ether + S-adenosyl-L-homocysteine + H(+). The catalysed reaction is (2S)-naringenin + S-adenosyl-L-methionine = (2S)-naringenin 4'-methyl ether + S-adenosyl-L-homocysteine + H(+). It carries out the reaction 4',7,8-trihydroxyflavone + S-adenosyl-L-methionine = 7,8-dihydroxy-4'-methoxyflavone + S-adenosyl-L-homocysteine + H(+). The enzyme catalyses taxifolin + S-adenosyl-L-methionine = taxifolin 4'-methyl ether + S-adenosyl-L-homocysteine + H(+). Its pathway is flavonoid metabolism. Functionally, flavonoid 4'-O-methyltransferase involved in the biosynthesis of polymethoxylated flavonoids natural products such as pebrellin, aroma compounds which contribute to the flavor of peppermint, and exhibit pharmacological activities such as anti-allergic, anti-oxidant, antibacterial, anti-proliferative, and anti-inflammatory effects. Catalyzes S-adenosylmethionine-dependent regioselective 4'-O-methylation of flavonoids; active on various hydroxylated flavonoid substrates, including isorhamnetin, kaempferol, apigenin (API), scutellarein (6-hydroxy-apigenin, 6-OH-API, SCU), taxifolin, 7,8,4'-trihydroxy-flavone and naringenin (NAR), and, with a lower efficiency, quercetin, rhamnetin, luteolin (LUT) and 7,8,3',4'-tetrahydroxy-flavone. The protein is Flavonoid 4'-O-methyltransferase 4 of Mentha piperita (Peppermint).